A 156-amino-acid chain; its full sequence is UPF0039 protein Mb2876c (156 aa).

In terms of domain architecture, N-acetyltransferase spans 8-150 (VWAKDLDARA…PHVPMLRPGS (143 aa)).

It belongs to the UPF0039 (ElaA) family.

This chain is UPF0039 protein Mb2876c, found in Mycobacterium bovis (strain ATCC BAA-935 / AF2122/97).